Here is a 137-residue protein sequence, read N- to C-terminus: Protein LTO1 homolog (137 aa).

Ala-2 is subject to N-acetylalanine. A deca-GX3 motif; required for interaction with YAE1 and the CIA complex region spans residues 22–58; that stretch reads GYQEGYEEGSSLGIVEGKRYGMVHGAKIGSEIGCYRG.

Belongs to the LTO1 family. Forms a complex with YAE1. Interacts with PYCR1 and PYCR2.

The protein resides in the nucleus. Its function is as follows. The complex LTO1:YAE1 functions as a target specific adapter that probably recruits apo-ABCE1 to the cytosolic iron-sulfur protein assembly (CIA) complex machinery. May be required for biogenesis of the large ribosomal subunit and initiation of translation. May play a role in the regulation of proline metabolism and ROS production. The chain is Protein LTO1 homolog from Mus musculus (Mouse).